A 366-amino-acid polypeptide reads, in one-letter code: Alanine racemase (366 aa).

The Proton acceptor; specific for D-alanine role is filled by Lys-40. N6-(pyridoxal phosphate)lysine is present on Lys-40. A substrate-binding site is contributed by Arg-136. Tyr-263 functions as the Proton acceptor; specific for L-alanine in the catalytic mechanism. Met-310 serves as a coordination point for substrate.

It belongs to the alanine racemase family. It depends on pyridoxal 5'-phosphate as a cofactor.

It carries out the reaction L-alanine = D-alanine. It functions in the pathway amino-acid biosynthesis; D-alanine biosynthesis; D-alanine from L-alanine: step 1/1. In terms of biological role, catalyzes the interconversion of L-alanine and D-alanine. May also act on other amino acids. The polypeptide is Alanine racemase (alr) (Streptococcus pyogenes serotype M1).